The following is a 732-amino-acid chain: Ubiquitin carboxyl-terminal hydrolase 21 (732 aa).

The span at 1–10 (MAEFSDPPPS) shows a compositional bias: pro residues. The interval 1 to 111 (MAEFSDPPPS…ISPVSNNNHL (111 aa)) is disordered. Composition is skewed to polar residues over residues 11 to 31 (NLSSSHKLTKPNQTLDESSPT) and 38 to 53 (VTNSLSLSSPIRQIQA). Low complexity predominate over residues 55-69 (SPAKPDGSSSSPPDK). The USP domain occupies 163–469 (AGLYNSGNTC…PAYILFYARE (307 aa)). The active-site Nucleophile is cysteine 172. Residue histidine 428 is the Proton acceptor of the active site. The interval 534-732 (KEEVFHSAES…SSNMRRSIKL (199 aa)) is disordered. A compositionally biased stretch (low complexity) spans 540-551 (SAESSNNEDSSA). Positions 583-609 (AYIDKSEKPFAETSQPKEPKPFADRAS) are enriched in basic and acidic residues. Over residues 719–732 (KKKKSSNMRRSIKL) the composition is skewed to basic residues.

The protein belongs to the peptidase C19 family.

The enzyme catalyses Thiol-dependent hydrolysis of ester, thioester, amide, peptide and isopeptide bonds formed by the C-terminal Gly of ubiquitin (a 76-residue protein attached to proteins as an intracellular targeting signal).. Recognizes and hydrolyzes the peptide bond at the C-terminal Gly of ubiquitin. Involved in the processing of poly-ubiquitin precursors as well as that of ubiquitinated proteins. The polypeptide is Ubiquitin carboxyl-terminal hydrolase 21 (UBP21) (Arabidopsis thaliana (Mouse-ear cress)).